Consider the following 206-residue polypeptide: Small ribosomal subunit protein uS4 (206 aa).

Residues 96 to 156 form the S4 RNA-binding domain; that stretch reads GRLDNVVYRM…EKAKKQSRVK (61 aa).

This sequence belongs to the universal ribosomal protein uS4 family. In terms of assembly, part of the 30S ribosomal subunit. Contacts protein S5. The interaction surface between S4 and S5 is involved in control of translational fidelity.

In terms of biological role, one of the primary rRNA binding proteins, it binds directly to 16S rRNA where it nucleates assembly of the body of the 30S subunit. Its function is as follows. With S5 and S12 plays an important role in translational accuracy. The chain is Small ribosomal subunit protein uS4 from Escherichia fergusonii (strain ATCC 35469 / DSM 13698 / CCUG 18766 / IAM 14443 / JCM 21226 / LMG 7866 / NBRC 102419 / NCTC 12128 / CDC 0568-73).